An 820-amino-acid polypeptide reads, in one-letter code: Phenylalanine--tRNA ligase beta subunit (820 aa).

In terms of domain architecture, tRNA-binding spans 42–154; it reads KGGLEGLVIG…AEAVPGTLAK (113 aa). The region spanning 413-489 is the B5 domain; it reads PQDFMVELSY…RIYGYNNVEI (77 aa). Mg(2+)-binding residues include D467, D473, E476, and D477. An FDX-ACB domain is found at 727-820; sequence SKFPAVKRDL…LEDKLNAKLR (94 aa).

This sequence belongs to the phenylalanyl-tRNA synthetase beta subunit family. Type 1 subfamily. In terms of assembly, tetramer of two alpha and two beta subunits. The cofactor is Mg(2+).

The protein localises to the cytoplasm. The catalysed reaction is tRNA(Phe) + L-phenylalanine + ATP = L-phenylalanyl-tRNA(Phe) + AMP + diphosphate + H(+). This Bacteroides thetaiotaomicron (strain ATCC 29148 / DSM 2079 / JCM 5827 / CCUG 10774 / NCTC 10582 / VPI-5482 / E50) protein is Phenylalanine--tRNA ligase beta subunit.